The primary structure comprises 267 residues: Tryptophan synthase alpha chain (267 aa).

Residues Glu43 and Asp54 each act as proton acceptor in the active site.

This sequence belongs to the TrpA family. As to quaternary structure, tetramer of two alpha and two beta chains.

The catalysed reaction is (1S,2R)-1-C-(indol-3-yl)glycerol 3-phosphate + L-serine = D-glyceraldehyde 3-phosphate + L-tryptophan + H2O. Its pathway is amino-acid biosynthesis; L-tryptophan biosynthesis; L-tryptophan from chorismate: step 5/5. Its function is as follows. The alpha subunit is responsible for the aldol cleavage of indoleglycerol phosphate to indole and glyceraldehyde 3-phosphate. The chain is Tryptophan synthase alpha chain from Bacillus subtilis subsp. natto.